Reading from the N-terminus, the 166-residue chain is Minor capsid protein VP2 (166 aa).

The segment at Pro138–Val166 is disordered. A compositionally biased stretch (pro residues) spans Gln149–Val166.

The protein belongs to the vesivirus VP2 protein family. Homooligomer. The portal-like structure consists in 12 copies of VP2. Interacts with capsid protein VP1.

It localises to the virion. It is found in the host cytoplasm. Minor structural protein that forms a portal-like structure at a unique three-fold axis of symmetry, following binding to the host receptor. The channel formed by VP2 may allow the delivery of the viral genome through the host endosomal membrane. The chain is Minor capsid protein VP2 from Homo sapiens (Human).